The following is a 365-amino-acid chain: Outer membrane porin protein LC (365 aa).

Positions 1-23 (MKKLTVAISAVAASVLMAMSAQA) are cleaved as a signal peptide.

Belongs to the Gram-negative porin family. As to quaternary structure, homotrimer.

It is found in the host cell outer membrane. Forms pores that allow passive diffusion of small molecules across the host cell outer membrane. The protein is Outer membrane porin protein LC (LC) of Enterobacteria phage PA-2 (Bacteriophage PA-2).